Reading from the N-terminus, the 186-residue chain is Riboflavin kinase (186 aa).

Positions 42 and 44 each coordinate Mg(2+). Residue Glu-123 is the Nucleophile of the active site.

The protein belongs to the flavokinase family. Zn(2+) is required as a cofactor. The cofactor is Mg(2+).

It carries out the reaction riboflavin + ATP = FMN + ADP + H(+). It functions in the pathway cofactor biosynthesis; FMN biosynthesis; FMN from riboflavin (ATP route): step 1/1. Functionally, catalyzes the phosphorylation of riboflavin (vitamin B2) to form flavin mononucleotide (FMN) coenzyme. The sequence is that of Riboflavin kinase (FMN1) from Eremothecium gossypii (strain ATCC 10895 / CBS 109.51 / FGSC 9923 / NRRL Y-1056) (Yeast).